The sequence spans 168 residues: S-ribosylhomocysteine lyase (168 aa).

Residues histidine 54, histidine 58, and cysteine 128 each coordinate Fe cation.

This sequence belongs to the LuxS family. Homodimer. Fe cation serves as cofactor.

It carries out the reaction S-(5-deoxy-D-ribos-5-yl)-L-homocysteine = (S)-4,5-dihydroxypentane-2,3-dione + L-homocysteine. In terms of biological role, involved in the synthesis of autoinducer 2 (AI-2) which is secreted by bacteria and is used to communicate both the cell density and the metabolic potential of the environment. The regulation of gene expression in response to changes in cell density is called quorum sensing. Catalyzes the transformation of S-ribosylhomocysteine (RHC) to homocysteine (HC) and 4,5-dihydroxy-2,3-pentadione (DPD). The chain is S-ribosylhomocysteine lyase from Neisseria meningitidis serogroup A / serotype 4A (strain DSM 15465 / Z2491).